The primary structure comprises 473 residues: Lysophospholipid acyltransferase 5 (473 aa).

Helical transmembrane passes span 20 to 40, 43 to 63, 66 to 86, and 88 to 108; these read LLISVLAGYPLAVVHRTFFYN, AQHQHLFFVIVGLSLWMFNCG, VIHPILSIFGAFFITNFMAGT, and ASIYAAHIVFLGHLLIGYWFH. Catalysis depends on residues asparagine 315 and histidine 351. A run of 3 helical transmembrane segments spans residues 341 to 361, 396 to 416, and 431 to 451; these read VITLSYLAIWHGYHLGYFLLF, FIWIFGKLTISYSMGFAFLMF, and LYFIGFIIYFIVWPILHMVLL. Positions 470–473 match the Di-lysine motif motif; the sequence is KKEL.

Belongs to the membrane-bound acyltransferase family.

The protein resides in the endoplasmic reticulum membrane. The catalysed reaction is a 1-acyl-sn-glycero-3-phosphocholine + an acyl-CoA = a 1,2-diacyl-sn-glycero-3-phosphocholine + CoA. The enzyme catalyses a 1-acyl-sn-glycero-3-phospho-L-serine + an acyl-CoA = a 1,2-diacyl-sn-glycero-3-phospho-L-serine + CoA. It carries out the reaction a 1-acyl-sn-glycero-3-phosphoethanolamine + an acyl-CoA = a 1,2-diacyl-sn-glycero-3-phosphoethanolamine + CoA. It functions in the pathway lipid metabolism; phospholipid metabolism. Probable acyltransferase which may mediate the conversion of lysophosphatidylcholine (1-acyl-sn-glycero-3-phosphocholine or LPC) into phosphatidylcholine (1,2-diacyl-sn-glycero-3-phosphocholine or PC) (LPCAT activity). May also catalyze the conversion of lysophosphatidylethanolamine (1-acyl-2-hydroxy-sn-glycero-3-phosphoethanolamine or LPE) into phosphatidylethanolamine (1,2-diacyl-sn-glycero-3-phosphoethanolamine or PE) (LPEAT activity), as well as the conversion of lysophosphatidylserine (1-acyl-2-hydroxy-sn-glycero-3-phospho-L-serine or LPS) into phosphatidylserine (1,2-diacyl-sn-glycero-3-phospho-L-serine or PS) (LPSAT activity). Required for incorporation of arachidonic acid into PC, PE, and PS. The sequence is that of Lysophospholipid acyltransferase 5 (mboa-6) from Caenorhabditis elegans.